Consider the following 72-residue polypeptide: Protein SlyX homolog (72 aa).

It belongs to the SlyX family.

This is Protein SlyX homolog from Bradyrhizobium diazoefficiens (strain JCM 10833 / BCRC 13528 / IAM 13628 / NBRC 14792 / USDA 110).